The primary structure comprises 337 residues: Adenosine deaminase-like protein (337 aa).

Zn(2+)-binding residues include His-14 and His-16. Residues His-16, Asn-18, His-66, Thr-98–Lys-101, and Gly-171 each bind N(6)-methyl-AMP. Position 198 (His-198) interacts with Zn(2+). Residues Glu-201, Asp-276, and Asp-277 each coordinate N(6)-methyl-AMP. Catalysis depends on Glu-201, which acts as the Proton donor. A Zn(2+)-binding site is contributed by Asp-276.

This sequence belongs to the metallo-dependent hydrolases superfamily. Adenosine and AMP deaminases family. As to quaternary structure, monomer. Zn(2+) is required as a cofactor.

It carries out the reaction N(6)-methyl-AMP + H2O + H(+) = IMP + methylamine. In terms of biological role, catalyzes the hydrolysis of the free cytosolic methylated adenosine nucleotide N(6)-methyl-AMP (N6-mAMP) to produce inositol monophosphate (IMP) and methylamine. Is required for the catabolism of cytosolic N6-mAMP, which is derived from the degradation of mRNA containing N6-methylated adenine (m6A). The protein is Adenosine deaminase-like protein (Ada) of Drosophila melanogaster (Fruit fly).